Consider the following 65-residue polypeptide: MAKKDQLTLRGPLYGNNRSHSKTITRRKWNVNLQPCKVKTADGKTTRILVSTRTLRTLKKHNRLS.

Positions 1–21 are disordered; that stretch reads MAKKDQLTLRGPLYGNNRSHS.

The protein belongs to the bacterial ribosomal protein bL28 family.

This chain is Large ribosomal subunit protein bL28, found in Mycoplasma pneumoniae (strain ATCC 29342 / M129 / Subtype 1) (Mycoplasmoides pneumoniae).